We begin with the raw amino-acid sequence, 269 residues long: MATH domain and coiled-coil domain-containing protein At2g01790 (269 aa).

Residues 6-134 (AVKKLWVINN…NGEVDIVAEV (129 aa)) enclose the MATH domain. Residues 228 to 269 (KLDWLEKKLKETGKSRLQEIEEDLKDLKVKCADMDALLEFLR) adopt a coiled-coil conformation.

The sequence is that of MATH domain and coiled-coil domain-containing protein At2g01790 from Arabidopsis thaliana (Mouse-ear cress).